The following is a 106-amino-acid chain: MVNVPKTRKTYCKGKECRKHTQHKVTQYKAGKASLFAQGKRRYDRKQSGYGGQTKPVFHKKAKTTKKVVLRLECVVCKTKAQLSLKRCKHFELGGDRKQKGQALQF.

This sequence belongs to the eukaryotic ribosomal protein eL42 family.

The sequence is that of Large ribosomal subunit protein eL42 (RPL44) from Wickerhamomyces ciferrii (strain ATCC 14091 / BCRC 22168 / CBS 111 / JCM 3599 / NBRC 0793 / NRRL Y-1031 F-60-10) (Yeast).